Consider the following 581-residue polypeptide: Caprolactamase subunit beta (581 aa).

Residues Asp41, His99, Asp102, and His124 each coordinate Zn(2+).

Belongs to the HyuB family. In terms of assembly, the caprolactamase is a heterotetramer composed of two alpha subunits (CapA) and two beta subunits (CapB). It depends on Zn(2+) as a cofactor.

Its activity is regulated as follows. Activity is dependent on the presence of ATP and bicarbonate. The requirement for bicarbonate may be related to allosteric activation through conformational effects, but it is also conceivable that carboxyphosphate is formed and acts as a mediator in caprolactam activation, forming carboxy- or phospholactim. Component of a caprolactamase involved in the degradation of caprolactam, an industrial compound mainly used in the production of Nylon 6. Catalyzes the ATP-dependent hydrolysis of the caprolactam ring to form 6-aminocaproic acid (6-ACA). The beta subunit is responsible for hydrolytic lactam ring opening. The enzyme cannot use 5-oxoproline. The polypeptide is Caprolactamase subunit beta (Pseudomonas jessenii).